The sequence spans 210 residues: Orotate phosphoribosyltransferase (210 aa).

5-phospho-alpha-D-ribose 1-diphosphate contacts are provided by residues R94, K98, H100, and E120 to S128. Position 124 (S124) interacts with orotate.

The protein belongs to the purine/pyrimidine phosphoribosyltransferase family. PyrE subfamily. As to quaternary structure, homodimer. It depends on Mg(2+) as a cofactor.

The catalysed reaction is orotidine 5'-phosphate + diphosphate = orotate + 5-phospho-alpha-D-ribose 1-diphosphate. Its pathway is pyrimidine metabolism; UMP biosynthesis via de novo pathway; UMP from orotate: step 1/2. Catalyzes the transfer of a ribosyl phosphate group from 5-phosphoribose 1-diphosphate to orotate, leading to the formation of orotidine monophosphate (OMP). The protein is Orotate phosphoribosyltransferase of Bacillus cereus (strain ATCC 10987 / NRS 248).